A 112-amino-acid polypeptide reads, in one-letter code: Nucleoid-associated protein Pfl01_1806 (112 aa).

Belongs to the YbaB/EbfC family. In terms of assembly, homodimer.

The protein resides in the cytoplasm. Its subcellular location is the nucleoid. In terms of biological role, binds to DNA and alters its conformation. May be involved in regulation of gene expression, nucleoid organization and DNA protection. The protein is Nucleoid-associated protein Pfl01_1806 of Pseudomonas fluorescens (strain Pf0-1).